A 422-amino-acid polypeptide reads, in one-letter code: ATP-dependent Clp protease ATP-binding subunit ClpX 1 (422 aa).

The ClpX-type ZB domain occupies 4–57 (DRKNRESGKLLYCSFCGKSQHEVRKLIAGPAVFVCDECVELCNDIIREDLQGSE). Residues Cys-16, Cys-19, Cys-38, and Cys-41 each contribute to the Zn(2+) site. Residue 120 to 127 (PTGSGKTL) participates in ATP binding.

It belongs to the ClpX chaperone family. As to quaternary structure, component of the ClpX-ClpP complex. Forms a hexameric ring that, in the presence of ATP, binds to fourteen ClpP subunits assembled into a disk-like structure with a central cavity, resembling the structure of eukaryotic proteasomes.

In terms of biological role, ATP-dependent specificity component of the Clp protease. It directs the protease to specific substrates. Can perform chaperone functions in the absence of ClpP. This is ATP-dependent Clp protease ATP-binding subunit ClpX 1 from Methylococcus capsulatus (strain ATCC 33009 / NCIMB 11132 / Bath).